Here is a 151-residue protein sequence, read N- to C-terminus: UPF0756 membrane protein lhv_0995 (151 aa).

The next 5 membrane-spanning stretches (helical) occupy residues 4–24 (WLFL…SLII), 25–45 (ATGV…LPVI), 52–72 (WGVT…QIGF), 78–98 (TFKS…AILS), and 115–135 (LVLG…GPVI).

The protein belongs to the UPF0756 family.

Its subcellular location is the cell membrane. This Lactobacillus helveticus (strain DPC 4571) protein is UPF0756 membrane protein lhv_0995.